A 499-amino-acid polypeptide reads, in one-letter code: Glucosylglycerol-phosphate synthase (499 aa).

Belongs to the glycosyltransferase 20 family. As to quaternary structure, interacts with GGP-P. In terms of processing, seems to be degraded, at least in vitro, by FtsH2. In an ftsH2 disruption strain inactive GGPS accumulates.

Its subcellular location is the cytoplasm. The catalysed reaction is ADP-alpha-D-glucose + sn-glycerol 3-phosphate = 2-O-(alpha-D-glucopyranosyl)-sn-glycerol 3-phosphate + ADP + H(+). It participates in glycan metabolism; glucosylglycerol biosynthesis. Its function is as follows. Involved in salt tolerance by producing GG-phosphate from ADP-glucose and glycerol-3-phosphate (G3P), an intermediate in the synthesis of the osmolyte glucosylglycerol (GG). This chain is Glucosylglycerol-phosphate synthase (ggpS), found in Synechocystis sp. (strain ATCC 27184 / PCC 6803 / Kazusa).